A 298-amino-acid polypeptide reads, in one-letter code: Nucleotide-binding protein RSKD131_3085 (298 aa).

ATP is bound at residue G11–T18. GTP is bound at residue D58 to N61.

It belongs to the RapZ-like family.

Displays ATPase and GTPase activities. This is Nucleotide-binding protein RSKD131_3085 from Cereibacter sphaeroides (strain KD131 / KCTC 12085) (Rhodobacter sphaeroides).